Reading from the N-terminus, the 763-residue chain is Dual specificity tyrosine-phosphorylation-regulated kinase 1A (763 aa).

At S14 the chain carries Phosphoserine. Residues 33–56 are disordered; it reads QMPHSHQYSDRRQPNISDQQVSAL. A compositionally biased stretch (polar residues) spans 46–56; sequence PNISDQQVSAL. Phosphotyrosine; by autocatalysis is present on Y111. The tract at residues 115-136 is disordered; sequence KKRRHQQGQGDDSSHKKERKVY. A Bipartite nuclear localization signal motif is present at residues 117-134; sequence RRHQQGQGDDSSHKKERK. Y140 is subject to Phosphotyrosine; by autocatalysis. The residue at position 145 (Y145) is a Phosphotyrosine. Position 159 is a phosphotyrosine; by autocatalysis (Y159). Positions 159 to 479 constitute a Protein kinase domain; that stretch reads YEIDSLIGKG…PYYALQHSFF (321 aa). 165-173 is a binding site for ATP; that stretch reads IGKGSFGQV. Y177 carries the phosphotyrosine; by autocatalysis modification. K188 contacts ATP. Y219 is modified (phosphotyrosine; by autocatalysis). 238-241 is an ATP binding site; sequence FEML. The Proton acceptor role is filled by D287. Phosphoserine; by autocatalysis is present on S310. 2 positions are modified to phosphotyrosine; by autocatalysis: Y319 and Y321. Phosphothreonine; by autocatalysis is present on T402. A disordered region spans residues 408-442; sequence TKDGKREYKPPGTRKLHNILGVETGGPGGRRAGES. A Phosphotyrosine; by autocatalysis modification is found at Y449. The span at 485–501 shows a compositional bias: polar residues; it reads EGTNTSNSVSTSPAMEQ. Disordered regions lie at residues 485–540, 596–679, and 744–763; these read EGTN…HSGG, NALH…GNQA, and DREESPMTGVCVQQSPVASS. Positions 502–525 are enriched in low complexity; that stretch reads SQSSGTTSSTSSSSGGSSGTSNSG. Phosphoserine is present on residues S529 and S538. Residues 595–625 form a histidine-rich domain (HRD) region; the sequence is QNALHHHHGNSSHHHHHHHHHHHHHGQQALG. Residues 598 to 620 show a composition bias toward basic residues; it reads LHHHHGNSSHHHHHHHHHHHHHG. Residues 634–645 show a composition bias toward polar residues; sequence NSPTNSSSTQDS. A compositionally biased stretch (low complexity) spans 654 to 672; that stretch reads SMTSLSSSTTSSSTSSSST. S748 and S758 each carry phosphoserine. Over residues 754–763 the composition is skewed to polar residues; it reads CVQQSPVASS.

This sequence belongs to the protein kinase superfamily. CMGC Ser/Thr protein kinase family. MNB/DYRK subfamily. In terms of assembly, interacts with RAD54L2/ARIP4. Interacts with CRY2. Interacts with RANBP9. Interacts with WDR68. Interacts with SIRT1. Post-translationally, can also autophosphorylate on serine and threonine residues (in vitro). Autophosphorylated on numerous tyrosine residues. As to expression, detected in brain (at protein level). Ubiquitous.

The protein localises to the nucleus speckle. It carries out the reaction L-seryl-[protein] + ATP = O-phospho-L-seryl-[protein] + ADP + H(+). The catalysed reaction is L-threonyl-[protein] + ATP = O-phospho-L-threonyl-[protein] + ADP + H(+). The enzyme catalyses L-tyrosyl-[protein] + ATP = O-phospho-L-tyrosyl-[protein] + ADP + H(+). It catalyses the reaction [DNA-directed RNA polymerase] + ATP = phospho-[DNA-directed RNA polymerase] + ADP + H(+). Inhibited by RANBP9. Inhibited by harmine, leucettamine B and leucettine L41. Functionally, dual-specificity kinase which possesses both serine/threonine and tyrosine kinase activities. Exhibits a substrate preference for proline at position P+1 and arginine at position P-3. Plays an important role in double-strand breaks (DSBs) repair following DNA damage. Mechanistically, phosphorylates RNF169 and increases its ability to block accumulation of TP53BP1 at the DSB sites thereby promoting homologous recombination repair (HRR). Also acts as a positive regulator of transcription by acting as a CTD kinase that mediates phosphorylation of the CTD (C-terminal domain) of the large subunit of RNA polymerase II (RNAP II) POLR2A. May play a role in a signaling pathway regulating nuclear functions of cell proliferation. Modulates alternative splicing by phosphorylating the splice factor SRSF6. Has pro-survival function and negatively regulates the apoptotic process. Promotes cell survival upon genotoxic stress through phosphorylation of SIRT1. This in turn inhibits p53/TP53 activity and apoptosis. Phosphorylates SEPTIN4, SEPTIN5 and SF3B1 at 'Thr-434'. This is Dual specificity tyrosine-phosphorylation-regulated kinase 1A (Dyrk1a) from Rattus norvegicus (Rat).